Here is a 420-residue protein sequence, read N- to C-terminus: CinA-like protein (420 aa).

It belongs to the CinA family.

The chain is CinA-like protein from Chloroherpeton thalassium (strain ATCC 35110 / GB-78).